The sequence spans 397 residues: Serpin B10 (397 aa).

A disordered region spans residues 62 to 85; that stretch reads RDQGVKSSPESEKKRKMEFNSSNS. Residues 70–79 show a composition bias toward basic and acidic residues; the sequence is PESEKKRKME. The Nuclear localization signal signature appears at 74 to 77; it reads KKRK.

The protein belongs to the serpin family. Ov-serpin subfamily.

It is found in the nucleus. The protein resides in the cytoplasm. In terms of biological role, protease inhibitor that may play a role in the regulation of protease activities during hematopoiesis and apoptosis induced by TNF. May regulate protease activities in the cytoplasm and in the nucleus. This chain is Serpin B10 (SERPINB10), found in Papio anubis (Olive baboon).